Reading from the N-terminus, the 165-residue chain is Transmembrane protein 253 (165 aa).

3 helical membrane-spanning segments follow: residues 31-51 (LVLAVSQLWLAVAVVPFAVSV), 60-80 (MTTALPLGPGILGLLTGIVTL), and 91-111 (LAGLLVLELSAEAFTLGGVLV). Positions 145 to 165 (EEVPELETGPTVASTAKRTNQ) are disordered. Residues 155–165 (TVASTAKRTNQ) are compositionally biased toward polar residues.

Its subcellular location is the membrane. The chain is Transmembrane protein 253 (TMEM253) from Bos taurus (Bovine).